The following is a 200-amino-acid chain: Casparian strip membrane protein 1 (200 aa).

The Cytoplasmic portion of the chain corresponds to 1 to 38 (MKSGDHAAIDVPESSAVAKGKAPLIATPREQKSGFKKG). The chain crosses the membrane as a helical span at residues 39-59 (LGIFDFLLRLGAIIAALAAAA). Residues 60-86 (TMGTSDETLPFFTQFFQFEASYDDLPT) lie on the Extracellular side of the membrane. Residues 87–107 (FMFFVIAMALIGGYLVLSLPF) form a helical membrane-spanning segment. The Cytoplasmic segment spans residues 108–121 (SIVTIVRPHAVAPR). A helical membrane pass occupies residues 122-142 (LLLFILDIVALTLTTAAGAAA). The Extracellular portion of the chain corresponds to 143-171 (AAIVYLAHNGNPNTNWLAICQQFGDFCQE). A helical membrane pass occupies residues 172–192 (VSGAVVASFVTVVVLMSLVLL). Residues 193 to 200 (SGVALKKH) lie on the Cytoplasmic side of the membrane.

It belongs to the Casparian strip membrane proteins (CASP) family. Homodimer and heterodimers.

The protein resides in the cell membrane. Functionally, regulates membrane-cell wall junctions and localized cell wall deposition. Required for establishment of the Casparian strip membrane domain (CSD) and the subsequent formation of Casparian strips, a cell wall modification of the root endodermis that determines an apoplastic barrier between the intraorganismal apoplasm and the extraorganismal apoplasm and prevents lateral diffusion. The protein is Casparian strip membrane protein 1 of Theobroma cacao (Cacao).